We begin with the raw amino-acid sequence, 95 residues long: Small ribosomal subunit protein bS6 (95 aa).

This sequence belongs to the bacterial ribosomal protein bS6 family.

Its function is as follows. Binds together with bS18 to 16S ribosomal RNA. This chain is Small ribosomal subunit protein bS6, found in Corynebacterium glutamicum (strain ATCC 13032 / DSM 20300 / JCM 1318 / BCRC 11384 / CCUG 27702 / LMG 3730 / NBRC 12168 / NCIMB 10025 / NRRL B-2784 / 534).